A 213-amino-acid polypeptide reads, in one-letter code: Cytochrome c biogenesis ATP-binding export protein CcmA (213 aa).

An ABC transporter domain is found at 11–213 (LTARNLECIR…TVTVHHLVLS (203 aa)). An ATP-binding site is contributed by 43–50 (GPNGSGKT).

It belongs to the ABC transporter superfamily. CcmA exporter (TC 3.A.1.107) family. The complex is composed of two ATP-binding proteins (CcmA) and two transmembrane proteins (CcmB).

The protein resides in the cell inner membrane. It catalyses the reaction heme b(in) + ATP + H2O = heme b(out) + ADP + phosphate + H(+). Functionally, part of the ABC transporter complex CcmAB involved in the biogenesis of c-type cytochromes; once thought to export heme, this seems not to be the case, but its exact role is uncertain. Responsible for energy coupling to the transport system. The polypeptide is Cytochrome c biogenesis ATP-binding export protein CcmA (Nitrosomonas europaea (strain ATCC 19718 / CIP 103999 / KCTC 2705 / NBRC 14298)).